The following is a 343-amino-acid chain: N-acetylornithine carbamoyltransferase (343 aa).

Residues 49-52 (SMRT), W77, and R112 each bind carbamoyl phosphate. A N(2)-acetyl-L-ornithine-binding site is contributed by E144. Residue 148-151 (HPCQ) participates in carbamoyl phosphate binding. N(2)-acetyl-L-ornithine-binding residues include K252 and L295. Carbamoyl phosphate is bound at residue 294 to 295 (CL). K302 is subject to N6-carboxylysine. R322 contacts carbamoyl phosphate.

This sequence belongs to the aspartate/ornithine carbamoyltransferase superfamily. AOTCase family. In terms of assembly, homotrimer.

It localises to the cytoplasm. The enzyme catalyses N(2)-acetyl-L-ornithine + carbamoyl phosphate = N(2)-acetyl-L-citrulline + phosphate + H(+). It functions in the pathway amino-acid biosynthesis; L-arginine biosynthesis. Its activity is regulated as follows. Carboxylation at Lys-302 increases the catalytic activity of the enzyme. Functionally, catalyzes the transfer of the carbamoyl group from carbamoyl phosphate to the delta-amino group of N(2)-acetyl-L-ornithine to produce N(2)-acetyl-L-citrulline. This is a step in an alternative arginine biosynthesis pathway. The enzyme has no activity with ornithine. This chain is N-acetylornithine carbamoyltransferase, found in Xanthomonas axonopodis pv. citri (strain 306).